A 290-amino-acid chain; its full sequence is MAPSNLPPVFNATSQDIEMLLAAQCHLGSKNLQVHMEPYLWKTRPDGINVINIGKTWEKIVLAARIIAAIDNPADVAVISARPYGQRAVLKFASHTGATAIAGRFTPGNFTNYITRSFKEPRLIIVTDPRTDAQAIKEASYVNIPVIALCDTDSPTEFVDVAIPTNNKGRHAIGLVWWLLAREVLRLRGTLATRETEWDVVVDLYFYRDPEAEETKEIADETKVAGAEEVGPAAIESGYVGDSWDAAAPGAAAPGAAFAAASATAGATWEAEASGDWAAESAQPNPETKW.

The tract at residues 269-290 is disordered; the sequence is WEAEASGDWAAESAQPNPETKW.

Belongs to the universal ribosomal protein uS2 family. As to quaternary structure, component of the small ribosomal subunit. Mature ribosomes consist of a small (40S) and a large (60S) subunit. The 40S subunit contains about 33 different proteins and 1 molecule of RNA (18S). The 60S subunit contains about 49 different proteins and 3 molecules of RNA (25S, 5.8S and 5S). Interacts with rps21.

The protein localises to the cytoplasm. In terms of biological role, required for the assembly and/or stability of the 40S ribosomal subunit. Required for the processing of the 20S rRNA-precursor to mature 18S rRNA in a late step of the maturation of 40S ribosomal subunits. This is Small ribosomal subunit protein uS2 (rps0) from Talaromyces marneffei (strain ATCC 18224 / CBS 334.59 / QM 7333) (Penicillium marneffei).